Consider the following 514-residue polypeptide: Probable type III restriction-modification enzyme HindVIP Res subunit (514 aa).

Belongs to the type III restriction-modification system Res protein family. In terms of assembly, contains two different subunits: Res and Mod. Mg(2+) serves as cofactor. The cofactor is S-adenosyl-L-methionine.

The enzyme catalyses Endonucleolytic cleavage of DNA to give specific double-stranded fragments with terminal 5'-phosphates.. In terms of biological role, a type III restriction enzyme that recognizes 2 inversely oriented double-stranded sequences 5'-CGAAT-3' and cleaves 25-27 base pairs downstream. After binding to one recognition site undergoes random one-dimensional diffusion along DNA until it collides with a stationary enzyme bound to the second DNA site, which is when DNA cleavage occurs. DNA restriction requires both the Res and Mod subunits. The sequence is that of Probable type III restriction-modification enzyme HindVIP Res subunit from Haemophilus influenzae (strain ATCC 51907 / DSM 11121 / KW20 / Rd).